The primary structure comprises 395 residues: Elongation factor Ts, mitochondrial (395 aa).

The N-terminal 63 residues, 1–63 (MAFARAVRRP…RGFGNFIRSF (63 aa)), are a transit peptide targeting the mitochondrion.

This sequence belongs to the EF-Ts family.

It localises to the mitochondrion. Associates with the EF-Tu.GDP complex and induces the exchange of GDP to GTP. It remains bound to the aminoacyl-tRNA.EF-Tu.GTP complex up to the GTP hydrolysis stage on the ribosome. This is Elongation factor Ts, mitochondrial from Arabidopsis thaliana (Mouse-ear cress).